Consider the following 515-residue polypeptide: Integrator complex subunit 14 (515 aa).

Residues 2 to 204 (PTVVVMDVSL…KNVQSMFGKL (203 aa)) form the VWFA domain. Positions 10, 12, and 86 each coordinate Mg(2+). The residue at position 418 (K418) is an N6-acetyllysine.

This sequence belongs to the Integrator subunit 14 family. In terms of assembly, component of the Integrator complex, composed of core subunits INTS1, INTS2, INTS3, INTS4, INTS5, INTS6, INTS7, INTS8, INTS9/RC74, INTS10, INTS11/CPSF3L, INTS12, INTS13, INTS14 and INTS15. The core complex associates with protein phosphatase 2A subunits PPP2CA and PPP2R1A, to form the Integrator-PP2A (INTAC) complex. INTS14 is part of the tail subcomplex, composed of INTS10, INTS13, INTS14 and INTS15.

Its subcellular location is the nucleus. Functionally, component of the integrator complex, a multiprotein complex that terminates RNA polymerase II (Pol II) transcription in the promoter-proximal region of genes. The integrator complex provides a quality checkpoint during transcription elongation by driving premature transcription termination of transcripts that are unfavorably configured for transcriptional elongation: the complex terminates transcription by (1) catalyzing dephosphorylation of the C-terminal domain (CTD) of Pol II subunit POLR2A/RPB1 and SUPT5H/SPT5, (2) degrading the exiting nascent RNA transcript via endonuclease activity and (3) promoting the release of Pol II from bound DNA. The integrator complex is also involved in terminating the synthesis of non-coding Pol II transcripts, such as enhancer RNAs (eRNAs), small nuclear RNAs (snRNAs), telomerase RNAs and long non-coding RNAs (lncRNAs). Within the integrator complex, INTS14 is part of the integrator tail module that acts as a platform for the recruitment of transcription factors at promoters. The protein is Integrator complex subunit 14 of Mus musculus (Mouse).